A 102-amino-acid chain; its full sequence is Small ribosomal subunit protein uS10 (102 aa).

This sequence belongs to the universal ribosomal protein uS10 family. Part of the 30S ribosomal subunit.

Involved in the binding of tRNA to the ribosomes. In Bacillus anthracis (strain A0248), this protein is Small ribosomal subunit protein uS10.